Reading from the N-terminus, the 199-residue chain is uncharacterized protein (199 aa).

This is an uncharacterized protein from Rhodococcus erythropolis (Arthrobacter picolinophilus).